A 359-amino-acid polypeptide reads, in one-letter code: Heat-inducible transcription repressor HrcA (359 aa).

The protein belongs to the HrcA family.

Functionally, negative regulator of class I heat shock genes (grpE-dnaK-dnaJ and groELS operons). Prevents heat-shock induction of these operons. This chain is Heat-inducible transcription repressor HrcA, found in Rhizobium meliloti (strain 1021) (Ensifer meliloti).